We begin with the raw amino-acid sequence, 862 residues long: Switch 2 (862 aa).

Disordered regions lie at residues 13 to 43 (PCGSFPSSSSLRVSSTQELEPSRKPPKSSLS) and 58 to 95 (KHESKISKTQVEDFDHNEDDHKRNIKFDEEEVDEDDER). The segment covering 16-27 (SFPSSSSLRVSS) has biased composition (low complexity). Residues 58–84 (KHESKISKTQVEDFDHNEDDHKRNIKF) are compositionally biased toward basic and acidic residues. The span at 85-95 (DEEEVDEDDER) shows a compositional bias: acidic residues. In terms of domain architecture, Helicase ATP-binding spans 151 to 323 (YNLYKNNHGG…FNLFEWVAPG (173 aa)). 164–171 (DDMGLGKT) is a binding site for ATP. Positions 274 to 277 (DEAH) match the DEAH box motif. A coiled-coil region spans residues 274–294 (DEAHRLKNEKSKLYEACLEIK). Residues 532–685 (ALEKLMASWI…VAGKMETRYF (154 aa)) form the Helicase C-terminal domain. A compositionally biased stretch (polar residues) spans 782-793 (TTSTSQRLNGDG). A disordered region spans residues 782-821 (TTSTSQRLNGDGNSADRKKKKRKGCSEEEDMSSSNREQKR).

This sequence belongs to the SNF2/RAD54 helicase family.

Its function is as follows. May be involved in early DNA damage response. Probable chromatin remodeling factor. The sequence is that of Switch 2 from Arabidopsis thaliana (Mouse-ear cress).